Reading from the N-terminus, the 138-residue chain is ATP synthase epsilon chain (138 aa).

It belongs to the ATPase epsilon chain family. As to quaternary structure, F-type ATPases have 2 components, CF(1) - the catalytic core - and CF(0) - the membrane proton channel. CF(1) has five subunits: alpha(3), beta(3), gamma(1), delta(1), epsilon(1). CF(0) has three main subunits: a, b and c.

It localises to the cellular thylakoid membrane. Its function is as follows. Produces ATP from ADP in the presence of a proton gradient across the membrane. This Synechococcus sp. (strain PCC 6716) protein is ATP synthase epsilon chain (atpC).